Here is a 387-residue protein sequence, read N- to C-terminus: UDP-N-acetylglucosamine--N-acetylmuramyl-(pentapeptide) pyrophosphoryl-undecaprenol N-acetylglucosamine transferase (387 aa).

Residues 23–25, asparagine 135, arginine 174, serine 203, isoleucine 261, 280–285, and glutamine 306 each bind UDP-N-acetyl-alpha-D-glucosamine; these read TGG and ALTVSE.

This sequence belongs to the glycosyltransferase 28 family. MurG subfamily.

The protein resides in the cell inner membrane. It catalyses the reaction di-trans,octa-cis-undecaprenyl diphospho-N-acetyl-alpha-D-muramoyl-L-alanyl-D-glutamyl-meso-2,6-diaminopimeloyl-D-alanyl-D-alanine + UDP-N-acetyl-alpha-D-glucosamine = di-trans,octa-cis-undecaprenyl diphospho-[N-acetyl-alpha-D-glucosaminyl-(1-&gt;4)]-N-acetyl-alpha-D-muramoyl-L-alanyl-D-glutamyl-meso-2,6-diaminopimeloyl-D-alanyl-D-alanine + UDP + H(+). It functions in the pathway cell wall biogenesis; peptidoglycan biosynthesis. Cell wall formation. Catalyzes the transfer of a GlcNAc subunit on undecaprenyl-pyrophosphoryl-MurNAc-pentapeptide (lipid intermediate I) to form undecaprenyl-pyrophosphoryl-MurNAc-(pentapeptide)GlcNAc (lipid intermediate II). This is UDP-N-acetylglucosamine--N-acetylmuramyl-(pentapeptide) pyrophosphoryl-undecaprenol N-acetylglucosamine transferase from Colwellia psychrerythraea (strain 34H / ATCC BAA-681) (Vibrio psychroerythus).